The primary structure comprises 193 residues: Shikimate kinase (193 aa).

31–36 provides a ligand contact to ATP; that stretch reads GVGKTT. T35 lines the Mg(2+) pocket. D53, R77, and G103 together coordinate substrate. R141 provides a ligand contact to ATP. R160 is a binding site for substrate. Q176 contributes to the ATP binding site.

Belongs to the shikimate kinase family. As to quaternary structure, monomer. The cofactor is Mg(2+).

It localises to the cytoplasm. The enzyme catalyses shikimate + ATP = 3-phosphoshikimate + ADP + H(+). Its pathway is metabolic intermediate biosynthesis; chorismate biosynthesis; chorismate from D-erythrose 4-phosphate and phosphoenolpyruvate: step 5/7. Its function is as follows. Catalyzes the specific phosphorylation of the 3-hydroxyl group of shikimic acid using ATP as a cosubstrate. This chain is Shikimate kinase, found in Novosphingobium aromaticivorans (strain ATCC 700278 / DSM 12444 / CCUG 56034 / CIP 105152 / NBRC 16084 / F199).